We begin with the raw amino-acid sequence, 769 residues long: Integrin beta-2 (769 aa).

Positions 1–22 (MLCRCSPLLLLVGLLTLRSALS) are cleaved as a signal peptide. Glutamine 23 carries the post-translational modification Pyrrolidone carboxylic acid. Residues 23–700 (QECAKYKVST…ETRECVKGPN (678 aa)) are Extracellular-facing. Residues 24–74 (ECAKYKVSTCRDCIESGPGCAWCQKLNFSGQGEPDSVRCDTREQLLAKGCV) form the PSI domain. 28 disulfide bridges follow: cysteine 25–cysteine 43, cysteine 33–cysteine 447, cysteine 36–cysteine 62, cysteine 46–cysteine 73, cysteine 191–cysteine 198, cysteine 246–cysteine 286, cysteine 386–cysteine 400, cysteine 420–cysteine 445, cysteine 449–cysteine 467, cysteine 459–cysteine 470, cysteine 472–cysteine 481, cysteine 483–cysteine 514, cysteine 497–cysteine 512, cysteine 506–cysteine 517, cysteine 519–cysteine 534, cysteine 536–cysteine 559, cysteine 541–cysteine 557, cysteine 549–cysteine 562, cysteine 564–cysteine 573, cysteine 575–cysteine 598, cysteine 582–cysteine 596, cysteine 590–cysteine 601, cysteine 603–cysteine 612, cysteine 615–cysteine 618, cysteine 622–cysteine 662, cysteine 628–cysteine 647, cysteine 631–cysteine 643, and cysteine 670–cysteine 695. N-linked (GlcNAc...) asparagine glycans are attached at residues asparagine 50 and asparagine 116. The 240-residue stretch at 124–363 (GYPIDLYYLM…ELIKNAYNKL (240 aa)) folds into the VWFA domain. Serine 136 and serine 138 together coordinate Mg(2+). Ca(2+) contacts are provided by serine 138, aspartate 141, aspartate 142, and aspartate 173. 4 residues coordinate Ca(2+): asparagine 229, aspartate 231, proline 233, and glutamate 234. Residue glutamate 234 participates in Mg(2+) binding. N-linked (GlcNAc...) asparagine glycosylation is present at asparagine 254. Ca(2+) contacts are provided by aspartate 264 and glutamate 347. Positions 397–399 (RGD) match the Cell attachment site motif. I-EGF domains lie at 449-482 (CGDSSKERTLCGNKGSMECGVCRCDAGYIGKHCE), 483-535 (CQTQ…QFCE), 536-574 (CDNMNCERFDGQVCGGEKRGLCFCSTCRCQEGFEGSACQ), and 575-613 (CLKSTQGCLNLQGVECSGRGRCRCNVCQCDFGYQPPLCT). An N-linked (GlcNAc...) asparagine glycan is attached at asparagine 501. Asparagine 642 carries an N-linked (GlcNAc...) asparagine glycan. Residues 701–723 (IAAIVGGTVGGVVLVGIFLLVIW) traverse the membrane as a helical segment. Residues 724–769 (KVLTHLSDLREYKRFEKEKLKSQWNNDNPLFKSATTTVMNPKFAER) are Cytoplasmic-facing. Phosphoserine occurs at positions 745 and 756. Residues threonine 758 and threonine 760 each carry the phosphothreonine modification.

It belongs to the integrin beta chain family. As to quaternary structure, heterodimer of an alpha and a beta subunit. The ITGB2 beta subunit associates with the ITGAL, ITGAM, ITGAX or ITGAD alpha subunits. Found in a complex with CD177 and ITGAM/CD11b. Interacts with FGR. Interacts with COPS5 and RANBP9. Interacts with FLNA (via filamin repeats 4, 9, 12, 17, 19, 21, and 23). Interacts with THBD. Post-translationally, both Ser-745 and Ser-756 become phosphorylated when T-cells are exposed to phorbol esters. Phosphorylation on Thr-758 (but not on Ser-756) allows interaction with 14-3-3 proteins.

Its subcellular location is the cell membrane. It localises to the membrane raft. In terms of biological role, integrin ITGAL/ITGB2 is a receptor for ICAM1, ICAM2, ICAM3 and ICAM4. Integrin ITGAL/ITGB2 is also a receptor for the secreted form of ubiquitin-like protein ISG15; the interaction is mediated by ITGAL. Integrins ITGAM/ITGB2 and ITGAX/ITGB2 are receptors for the iC3b fragment of the third complement component and for fibrinogen. Integrin ITGAX/ITGB2 recognizes the sequence G-P-R in fibrinogen alpha-chain. Integrin ITGAM/ITGB2 recognizes P1 and P2 peptides of fibrinogen gamma chain. Integrin ITGAM/ITGB2 is also a receptor for factor X. Integrin ITGAD/ITGB2 is a receptor for ICAM3 and VCAM1. Contributes to natural killer cell cytotoxicity. Involved in leukocyte adhesion and transmigration of leukocytes including T-cells and neutrophils. Triggers neutrophil transmigration during lung injury through PTK2B/PYK2-mediated activation. Integrin alpha-L/beta-2 in association with ICAM3, contributes to apoptotic neutrophil phagocytosis by macrophages. This Sus scrofa (Pig) protein is Integrin beta-2 (ITGB2).